Consider the following 335-residue polypeptide: Ferrochelatase (335 aa).

Residues His192 and Glu291 each coordinate Fe cation.

It belongs to the ferrochelatase family.

It localises to the cytoplasm. The catalysed reaction is heme b + 2 H(+) = protoporphyrin IX + Fe(2+). Its pathway is porphyrin-containing compound metabolism; protoheme biosynthesis; protoheme from protoporphyrin-IX: step 1/1. Catalyzes the ferrous insertion into protoporphyrin IX. The polypeptide is Ferrochelatase (Bdellovibrio bacteriovorus (strain ATCC 15356 / DSM 50701 / NCIMB 9529 / HD100)).